The chain runs to 197 residues: Recombination protein RecR (197 aa).

A C4-type zinc finger spans residues 55–70; the sequence is CVQCRDFTESEICTIC. The 96-residue stretch at 78 to 173 folds into the Toprim domain; that stretch reads QQLCVVESPA…RPSRLAQGMP (96 aa).

This sequence belongs to the RecR family.

Its function is as follows. May play a role in DNA repair. It seems to be involved in an RecBC-independent recombinational process of DNA repair. It may act with RecF and RecO. This is Recombination protein RecR from Xanthomonas oryzae pv. oryzae (strain MAFF 311018).